Here is a 150-residue protein sequence, read N- to C-terminus: Regulatory protein RecX (150 aa).

Belongs to the RecX family.

It localises to the cytoplasm. Functionally, modulates RecA activity. The polypeptide is Regulatory protein RecX (Ectopseudomonas mendocina (strain ymp) (Pseudomonas mendocina)).